Reading from the N-terminus, the 313-residue chain is L-lactate dehydrogenase 1 (313 aa).

NAD(+) is bound by residues Val15, Asp36, Arg41, and Tyr66. Substrate contacts are provided by residues Gln83, Arg89, and 121-124 (NPVD). NAD(+) contacts are provided by residues 119-121 (ASN) and Ser144. Position 149–152 (149–152 (DTAR)) interacts with substrate. Beta-D-fructose 1,6-bisphosphate-binding residues include Arg154 and His169. Catalysis depends on His176, which acts as the Proton acceptor. Residue Tyr218 is modified to Phosphotyrosine. A substrate-binding site is contributed by Thr227.

Belongs to the LDH/MDH superfamily. LDH family. In terms of assembly, homotetramer.

The protein resides in the cytoplasm. It carries out the reaction (S)-lactate + NAD(+) = pyruvate + NADH + H(+). Its pathway is fermentation; pyruvate fermentation to lactate; (S)-lactate from pyruvate: step 1/1. Allosterically activated by fructose 1,6-bisphosphate (FBP). In terms of biological role, catalyzes the conversion of lactate to pyruvate. The chain is L-lactate dehydrogenase 1 from Listeria innocua serovar 6a (strain ATCC BAA-680 / CLIP 11262).